The chain runs to 142 residues: Transcriptional regulator MraZ (142 aa).

SpoVT-AbrB domains are found at residues 5-51 (ASAL…PRPE) and 77-120 (AADV…DAAT).

Belongs to the MraZ family. In terms of assembly, forms oligomers.

Its subcellular location is the cytoplasm. The protein resides in the nucleoid. This chain is Transcriptional regulator MraZ, found in Ralstonia pickettii (strain 12J).